The primary structure comprises 152 residues: Small ribosomal subunit protein uS17A (152 aa).

Belongs to the universal ribosomal protein uS17 family. Component of the small ribosomal subunit (SSU). Mature yeast ribosomes consist of a small (40S) and a large (60S) subunit. The 40S small subunit contains 1 molecule of ribosomal RNA (18S rRNA) and at least 33 different proteins. The large 60S subunit contains 3 rRNA molecules (25S, 5.8S and 5S rRNA) and at least 46 different proteins.

It is found in the cytoplasm. The protein localises to the nucleus. Its function is as follows. Component of the ribosome, a large ribonucleoprotein complex responsible for the synthesis of proteins in the cell. The small ribosomal subunit (SSU) binds messenger RNAs (mRNAs) and translates the encoded message by selecting cognate aminoacyl-transfer RNA (tRNA) molecules. The large subunit (LSU) contains the ribosomal catalytic site termed the peptidyl transferase center (PTC), which catalyzes the formation of peptide bonds, thereby polymerizing the amino acids delivered by tRNAs into a polypeptide chain. The nascent polypeptides leave the ribosome through a tunnel in the LSU and interact with protein factors that function in enzymatic processing, targeting, and the membrane insertion of nascent chains at the exit of the ribosomal tunnel. This is Small ribosomal subunit protein uS17A (rps1101) from Schizosaccharomyces pombe (strain 972 / ATCC 24843) (Fission yeast).